Here is a 470-residue protein sequence, read N- to C-terminus: Solute carrier family 7 member 13 (470 aa).

Over 1–11 (MDRGEKIQLKR) the chain is Cytoplasmic. The helical transmembrane segment at 12-32 (VFGYWWGTSFLLINIIGAGIF) threads the bilayer. The Extracellular portion of the chain corresponds to 33 to 45 (VSPKGVLAYSCMN). The chain crosses the membrane as a helical span at residues 46-66 (VGVSLCVWAGCAILAMTSTLC). The Cytoplasmic segment spans residues 67 to 87 (SAEISISFPCSGAQYYFLKRY). Residues 88 to 108 (FGSTVAFLNLWTSLFLGSGVV) form a helical membrane-spanning segment. Over 109 to 128 (AGQALLLAEYSIQPFFPSCS) the chain is Extracellular. Residues 129–149 (VPKLPKKCLALAMLWIVGILT) form a helical membrane-spanning segment. The Cytoplasmic segment spans residues 150 to 162 (SRGVKEVTWLQIA). A helical transmembrane segment spans residues 163-183 (SSVLKVSILSFISLTGVVFLI). Residues 184–206 (RGKKENVERFQNAFDAELPDISH) are Extracellular-facing. Residues 207–227 (LIQAIFQGYFAYSGGACFTLI) form a helical membrane-spanning segment. At 228–240 (AGELKKPRTTIPK) the chain is on the cytoplasmic side. Residues 241–261 (CIFTALPLVTVVYLLVNISYL) form a helical membrane-spanning segment. Over 262–287 (TVLTPREILSSDAVAITWADRAFPSL) the chain is Extracellular. A helical membrane pass occupies residues 288–308 (AWIMPFAISTSLFSNLLISIF). At 309–336 (KSSRPIYLASQEGQLPLLFNTLNSHSSP) the chain is on the cytoplasmic side. The helical transmembrane segment at 337–357 (FTAVLLLVTLGSLAIILTSLI) threads the bilayer. Residue Asp358 is a topological domain, extracellular. The helical transmembrane segment at 359-379 (LINYIFFTGSLWSILLMIGIL) threads the bilayer. Over 380–393 (RRRYQEPNLSIPYK) the chain is Cytoplasmic. A helical membrane pass occupies residues 394 to 414 (VFLSFPLATIVIDVGLVVIPL). Residues 415 to 421 (VKSPNVH) are Extracellular-facing. A helical transmembrane segment spans residues 422–442 (YVYVLLLVLSGLLFYIPLIHF). Residues 443–470 (KIRLAWFEKMTCYLQLLFNICLPDVSEE) are Cytoplasmic-facing.

Belongs to the amino acid-polyamine-organocation (APC) superfamily. Disulfide-linked heterodimer composed of the catalytic light subunit SLC7A13 and the heavy subunit SLC3A1. As to expression, expressed in the kidney.

Its subcellular location is the apical cell membrane. The catalysed reaction is L-cystine(out) + L-aspartate(in) = L-cystine(in) + L-aspartate(out). It carries out the reaction L-cystine(out) = L-cystine(in). It catalyses the reaction L-aspartate(in) + L-glutamate(out) = L-aspartate(out) + L-glutamate(in). The enzyme catalyses L-aspartate(in) + L-glutamine(out) = L-aspartate(out) + L-glutamine(in). The catalysed reaction is L-aspartate(in) + L-methionine(out) = L-aspartate(out) + L-methionine(in). It carries out the reaction L-leucine(out) + L-aspartate(in) = L-leucine(in) + L-aspartate(out). It catalyses the reaction L-valine(out) + L-aspartate(in) = L-valine(in) + L-aspartate(out). The enzyme catalyses L-aspartate(in) + L-phenylalanine(out) = L-aspartate(out) + L-phenylalanine(in). The catalysed reaction is L-tyrosine(out) + L-aspartate(in) = L-tyrosine(in) + L-aspartate(out). It carries out the reaction L-tryptophan(out) + L-aspartate(in) = L-tryptophan(in) + L-aspartate(out). Its function is as follows. Associates with SLC3A1/rBAT to form a functional heterodimeric complex that transports anionic and neutral amino acids across the apical plasma membrane of renal epithelium. Preferentially mediates exchange transport, but can also operate via facilitated diffusion. May act as a major transporter for L-cystine in late proximal tubules, ensuring its reabsorption from the luminal fluid in exchange for cytosolic L-glutamate or L-aspartate. This chain is Solute carrier family 7 member 13 (SLC7A13), found in Homo sapiens (Human).